Here is a 227-residue protein sequence, read N- to C-terminus: Ribosomal RNA small subunit methyltransferase G (227 aa).

Residues Gly-74, Leu-79, 124–125 (AE), and Arg-142 each bind S-adenosyl-L-methionine.

Belongs to the methyltransferase superfamily. RNA methyltransferase RsmG family.

It is found in the cytoplasm. Its function is as follows. Specifically methylates the N7 position of guanine in position 518 of 16S rRNA. The polypeptide is Ribosomal RNA small subunit methyltransferase G (Mycolicibacterium gilvum (strain PYR-GCK) (Mycobacterium gilvum (strain PYR-GCK))).